The primary structure comprises 256 residues: E3 ubiquitin-protein ligase MIR2 (256 aa).

Residues methionine 1–glutamate 83 are Cytoplasmic-facing. Residues glutamate 7–arginine 66 form an RING-CH-type zinc finger. Residues cysteine 15, cysteine 18, cysteine 30, cysteine 32, histidine 40, cysteine 43, cysteine 56, and cysteine 59 each coordinate Zn(2+). The chain crosses the membrane as a helical span at residues isoleucine 84–cysteine 104. The Extracellular portion of the chain corresponds to threonine 105 to valine 124. Residues leucine 125–isoleucine 145 traverse the membrane as a helical segment. At cysteine 146–glycine 256 the chain is on the cytoplasmic side. The segment at aspartate 179–glycine 256 is disordered. The segment covering threonine 193–glutamate 203 has biased composition (acidic residues). Residues lysine 245–glycine 256 show a composition bias toward basic residues.

In terms of assembly, binds human MHC-I, CD86, ICAM1 and CD1D.

The protein localises to the host cell membrane. The protein resides in the host endoplasmic reticulum. The catalysed reaction is S-ubiquitinyl-[E2 ubiquitin-conjugating enzyme]-L-cysteine + [acceptor protein]-L-lysine = [E2 ubiquitin-conjugating enzyme]-L-cysteine + N(6)-ubiquitinyl-[acceptor protein]-L-lysine.. It functions in the pathway protein modification; protein ubiquitination. Functionally, membrane-bound E3 ubiquitin ligase expressed at the immediate early stage of viral reactivation to mediate polyubiquitination of various host membrane proteins related to the immune response. Promotes ubiquitination and subsequent degradation of host MHC-I, CD86, DC-SIGN and DC-SIGNR, ICAM1 and CD1D molecules, presumably to prevent lysis of infected cells by cytotoxic T-lymphocytes and NK cell. Plays a role in the down-regulation of the host stress-induced NKG2D ligands MICA, MICB and CLEC2B, which enable immune cells expressing the NKG2D receptor to recognize and annihilate infected cells prior to viral spread. Alters monocyte metabolism and proliferation by mediating rapid internalization of cellular growth factor-binding receptor tyrosine kinases from the surface leading to increased signaling. This Homo sapiens (Human) protein is E3 ubiquitin-protein ligase MIR2 (K5).